A 76-amino-acid chain; its full sequence is Putative membrane protein insertion efficiency factor (76 aa).

This sequence belongs to the UPF0161 family.

The protein localises to the cell inner membrane. In terms of biological role, could be involved in insertion of integral membrane proteins into the membrane. The sequence is that of Putative membrane protein insertion efficiency factor from Paraburkholderia phytofirmans (strain DSM 17436 / LMG 22146 / PsJN) (Burkholderia phytofirmans).